A 156-amino-acid polypeptide reads, in one-letter code: Translation initiation factor IF-1, chloroplastic (156 aa).

The interval 1–35 (MAASLTLMTSPPCSRSSKSPSPSPSPSLSCNQQQQ) is disordered. A chloroplast-targeting transit peptide spans 1–49 (MAASLTLMTSPPCSRSSKSPSPSPSPSLSCNQQQQYKPLLHHQWPPQIS). The span at 10-20 (SPPCSRSSKSP) shows a compositional bias: low complexity. An S1-like domain is found at 72–148 (GGSPSVQEQK…TRGRITYRLR (77 aa)).

This sequence belongs to the IF-1 family. In terms of assembly, component of the 30S ribosomal translation pre-initiation complex which assembles on the 30S ribosome in the order IF-2 and IF-3, IF-1 and N-formylmethionyl-tRNA(fMet); mRNA recruitment can occur at any time during PIC assembly.

It is found in the plastid. The protein resides in the chloroplast. Functionally, one of the essential components for the initiation of protein synthesis. Stabilizes the binding of IF-2 and IF-3 on the 30S subunit to which N-formylmethionyl-tRNA(fMet) subsequently binds. Helps modulate mRNA selection, yielding the 30S pre-initiation complex (PIC). Upon addition of the 50S ribosomal subunit IF-1, IF-2 and IF-3 are released leaving the mature 70S translation initiation complex. In Mesembryanthemum crystallinum (Common ice plant), this protein is Translation initiation factor IF-1, chloroplastic (infA).